Here is a 188-residue protein sequence, read N- to C-terminus: dCTP deaminase (188 aa).

DCTP-binding positions include 111–116, 135–137, glutamine 156, tyrosine 170, lysine 179, and glutamine 180; these read KSTYAR and TLE. Glutamate 137 acts as the Proton donor/acceptor in catalysis.

The protein belongs to the dCTP deaminase family. Homotrimer.

It catalyses the reaction dCTP + H2O + H(+) = dUTP + NH4(+). It functions in the pathway pyrimidine metabolism; dUMP biosynthesis; dUMP from dCTP (dUTP route): step 1/2. Functionally, catalyzes the deamination of dCTP to dUTP. In Orientia tsutsugamushi (strain Boryong) (Rickettsia tsutsugamushi), this protein is dCTP deaminase.